The following is a 289-amino-acid chain: Acetyl-coenzyme A carboxylase carboxyl transferase subunit beta 2 (289 aa).

The CoA carboxyltransferase N-terminal domain maps to 25–289 (VWTKCPSCEQ…TNKSIQPEAE (265 aa)). The Zn(2+) site is built by C29, C32, C48, and C51. The C4-type zinc finger occupies 29–51 (CPSCEQVLYRIALKENLEVCPKC).

Belongs to the AccD/PCCB family. As to quaternary structure, acetyl-CoA carboxylase is a heterohexamer composed of biotin carboxyl carrier protein (AccB), biotin carboxylase (AccC) and two subunits each of ACCase subunit alpha (AccA) and ACCase subunit beta (AccD). The cofactor is Zn(2+).

It localises to the cytoplasm. It carries out the reaction N(6)-carboxybiotinyl-L-lysyl-[protein] + acetyl-CoA = N(6)-biotinyl-L-lysyl-[protein] + malonyl-CoA. It participates in lipid metabolism; malonyl-CoA biosynthesis; malonyl-CoA from acetyl-CoA: step 1/1. In terms of biological role, component of the acetyl coenzyme A carboxylase (ACC) complex. Biotin carboxylase (BC) catalyzes the carboxylation of biotin on its carrier protein (BCCP) and then the CO(2) group is transferred by the transcarboxylase to acetyl-CoA to form malonyl-CoA. This chain is Acetyl-coenzyme A carboxylase carboxyl transferase subunit beta 2, found in Vibrio campbellii (strain ATCC BAA-1116).